The chain runs to 156 residues: rRNA methyltransferase (156 aa).

Modifies 16S rRNA so making ribosomes resistant to certain aminoglycosides. The protein is rRNA methyltransferase (kamC) of Saccharopolyspora hirsuta.